Reading from the N-terminus, the 460-residue chain is Kynureninase (460 aa).

Pyridoxal 5'-phosphate is bound by residues Leu-127, Thr-128, 165–168 (FPSD), Asp-249, His-252, and Tyr-274. Position 275 is an N6-(pyridoxal phosphate)lysine (Lys-275). Pyridoxal 5'-phosphate-binding residues include Trp-304 and Asn-332.

The protein belongs to the kynureninase family. In terms of assembly, homodimer. Pyridoxal 5'-phosphate is required as a cofactor.

It localises to the cytoplasm. It carries out the reaction L-kynurenine + H2O = anthranilate + L-alanine + H(+). It catalyses the reaction 3-hydroxy-L-kynurenine + H2O = 3-hydroxyanthranilate + L-alanine + H(+). The protein operates within amino-acid degradation; L-kynurenine degradation; L-alanine and anthranilate from L-kynurenine: step 1/1. It functions in the pathway cofactor biosynthesis; NAD(+) biosynthesis; quinolinate from L-kynurenine: step 2/3. Its function is as follows. Catalyzes the cleavage of L-kynurenine (L-Kyn) and L-3-hydroxykynurenine (L-3OHKyn) into anthranilic acid (AA) and 3-hydroxyanthranilic acid (3-OHAA), respectively. The sequence is that of Kynureninase from Monosiga brevicollis (Choanoflagellate).